A 352-amino-acid polypeptide reads, in one-letter code: Protein Wnt-3a (352 aa).

Positions 1 to 18 (MASFGYFLFLCGLSQALS) are cleaved as a signal peptide. A disulfide bridge connects residues Cys77 and Cys88. 2 N-linked (GlcNAc...) asparagine glycosylation sites follow: Asn87 and Asn92. Disulfide bonds link Cys128-Cys136, Cys138-Cys155, Cys203-Cys217, Cys205-Cys212, Cys281-Cys312, Cys297-Cys307, Cys311-Cys351, Cys327-Cys342, Cys329-Cys339, and Cys334-Cys335. The O-palmitoleoyl serine; by PORCN moiety is linked to residue Ser209. A glycan (N-linked (GlcNAc...) asparagine) is linked at Asn298.

This sequence belongs to the Wnt family. In terms of processing, palmitoleoylation is required for efficient binding to frizzled receptors. Depalmitoleoylation leads to inhibit the Wnt signaling pathway. Post-translationally, disulfide bonds have critical and distinct roles in secretion and activity. Loss of each conserved cysteine in WNT3A results in high molecular weight oxidized Wnt oligomers, which are formed through inter-Wnt disulfide bonding. Expressed in cornea. Isoform 1 is expressed in the primitive streak, dorsal neural tube, proximal otic vesicle, the apical ectodermal ridge and the epithelium of feather buds.

Its subcellular location is the secreted. It is found in the extracellular space. The protein localises to the extracellular matrix. It localises to the cytoplasm. In terms of biological role, ligand for members of the frizzled family of seven transmembrane receptors. Functions in the canonical Wnt signaling pathway that results in activation of transcription factors of the TCF/LEF family. Regulates chick apical ectodermal ridge formation. Required for normal embryonic mesoderm development and formation of caudal somites. Required for normal morphogenesis of the developing neural tube. This chain is Protein Wnt-3a (WNT3A), found in Gallus gallus (Chicken).